The sequence spans 839 residues: Taste receptor type 1 member 2 (839 aa).

The signal sequence occupies residues 1-19 (MRPRATTICSLFFLLRVLA). Residues 20 to 566 (EPAKNSDFYL…AFLEWHEAPT (547 aa)) are Extracellular-facing. N-linked (GlcNAc...) asparagine glycans are attached at residues Asn84, Asn127, Asn248, Asn292, Asn312, Asn368, Asn428, Asn487, and Asn527. Residues 567–587 (IVVALLAALGFLSTLAILVIF) traverse the membrane as a helical segment. The Cytoplasmic segment spans residues 588–602 (WRHFQTPMVRSAGGP). The chain crosses the membrane as a helical span at residues 603-623 (MCFLMLTLLLVAYMVVPVYVG). At 624 to 635 (PPKVSTCFCRQA) the chain is on the extracellular side. Residues 636–656 (LFPLCFTICISCIAVRSFQIV) form a helical membrane-spanning segment. At 657 to 681 (CVFKMASRFPRAYSYWVRYQGPYVS) the chain is on the cytoplasmic side. Residues 682-702 (MAFITVLKMVTVVIGMLATGL) traverse the membrane as a helical segment. The Extracellular segment spans residues 703–727 (NPTTRIDPDDPKIMIVSCNPNYRNS). The helical transmembrane segment at 728 to 748 (LFFNTGLDLLLSVVGFSFAYM) threads the bilayer. Topologically, residues 749–760 (GKELPTNYNEAK) are cytoplasmic. A helical transmembrane segment spans residues 761-781 (FITLSMTFYFTSSVSLCTFMS). Topologically, residues 782-784 (AYN) are extracellular. A helical transmembrane segment spans residues 785 to 805 (GVLVTIMDLLVTVLNLLAISL). The Cytoplasmic segment spans residues 806–839 (GYFGPKCYMILFYPERNTPAYFNSMIQGYTMRRD).

It belongs to the G-protein coupled receptor 3 family. TAS1R subfamily. In terms of assembly, forms heterodimers with TAS1R3.

The protein resides in the cell membrane. Functionally, putative taste receptor. TAS1R2/TAS1R3 recognizes diverse natural and synthetic sweeteners. In Papio hamadryas (Hamadryas baboon), this protein is Taste receptor type 1 member 2 (TAS1R2).